We begin with the raw amino-acid sequence, 85 residues long: MSERGNRKTQVGVVVSDKMDKTAVVKVDRLVKHPVYNKYIKRSAKYKAHDMDNAAKIGDRVLIVETRPLSKDKRWKIRQIIESKG.

The protein belongs to the universal ribosomal protein uS17 family. Part of the 30S ribosomal subunit.

Functionally, one of the primary rRNA binding proteins, it binds specifically to the 5'-end of 16S ribosomal RNA. In Citrifermentans bemidjiense (strain ATCC BAA-1014 / DSM 16622 / JCM 12645 / Bem) (Geobacter bemidjiensis), this protein is Small ribosomal subunit protein uS17.